Reading from the N-terminus, the 554-residue chain is Thermosome subunit beta (554 aa).

A disordered region spans residues 532–554 (GKKSGSEPSGKKEKDKEEKSSED). A compositionally biased stretch (basic and acidic residues) spans 540–554 (SGKKEKDKEEKSSED).

Belongs to the TCP-1 chaperonin family. As to quaternary structure, forms a Heterooligomeric complex of two stacked eight-membered rings.

In terms of biological role, molecular chaperone; binds unfolded polypeptides in vitro, and has a weak ATPase activity. This is Thermosome subunit beta (thsB) from Saccharolobus solfataricus (strain ATCC 35092 / DSM 1617 / JCM 11322 / P2) (Sulfolobus solfataricus).